The chain runs to 131 residues: ATP synthase epsilon chain (131 aa).

Belongs to the ATPase epsilon chain family. In terms of assembly, F-type ATPases have 2 components, CF(1) - the catalytic core - and CF(0) - the membrane proton channel. CF(1) has five subunits: alpha(3), beta(3), gamma(1), delta(1), epsilon(1). CF(0) has three main subunits: a, b and c.

It localises to the cell membrane. In terms of biological role, produces ATP from ADP in the presence of a proton gradient across the membrane. The protein is ATP synthase epsilon chain of Bacillus pumilus (strain SAFR-032).